Reading from the N-terminus, the 144-residue chain is Large ribosomal subunit protein uL11 (144 aa).

Belongs to the universal ribosomal protein uL11 family. As to quaternary structure, part of the ribosomal stalk of the 50S ribosomal subunit. Interacts with L10 and the large rRNA to form the base of the stalk. L10 forms an elongated spine to which L12 dimers bind in a sequential fashion forming a multimeric L10(L12)X complex. In terms of processing, one or more lysine residues are methylated.

Its function is as follows. Forms part of the ribosomal stalk which helps the ribosome interact with GTP-bound translation factors. This Corynebacterium efficiens (strain DSM 44549 / YS-314 / AJ 12310 / JCM 11189 / NBRC 100395) protein is Large ribosomal subunit protein uL11.